Here is a 293-residue protein sequence, read N- to C-terminus: Phosphatidate cytidylyltransferase (293 aa).

The next 8 membrane-spanning stretches (helical) occupy residues 6 to 26 (IISA…GGWY), 51 to 71 (IAPA…SATV), 73 to 93 (PHLT…YLLF), 97 to 117 (MATI…GYLP), 157 to 177 (LLVT…AYIM), 195 to 215 (VEGS…GAWY), 218 to 238 (WPYW…VSLL), and 273 to 293 (VFTA…LNNL).

It belongs to the CDS family.

The protein resides in the cell membrane. The enzyme catalyses a 1,2-diacyl-sn-glycero-3-phosphate + CTP + H(+) = a CDP-1,2-diacyl-sn-glycerol + diphosphate. The protein operates within phospholipid metabolism; CDP-diacylglycerol biosynthesis; CDP-diacylglycerol from sn-glycerol 3-phosphate: step 3/3. The sequence is that of Phosphatidate cytidylyltransferase (cdsA) from Synechocystis sp. (strain ATCC 27184 / PCC 6803 / Kazusa).